Here is a 430-residue protein sequence, read N- to C-terminus: Serine--tRNA ligase (430 aa).

236–238 is an L-serine binding site; the sequence is TAE. ATP is bound at residue 267–269; sequence RSE. Glu290 serves as a coordination point for L-serine. 354–357 provides a ligand contact to ATP; the sequence is EISS. Position 390 (Ser390) interacts with L-serine.

It belongs to the class-II aminoacyl-tRNA synthetase family. Type-1 seryl-tRNA synthetase subfamily. Homodimer. The tRNA molecule binds across the dimer.

Its subcellular location is the cytoplasm. It carries out the reaction tRNA(Ser) + L-serine + ATP = L-seryl-tRNA(Ser) + AMP + diphosphate + H(+). It catalyses the reaction tRNA(Sec) + L-serine + ATP = L-seryl-tRNA(Sec) + AMP + diphosphate + H(+). Its pathway is aminoacyl-tRNA biosynthesis; selenocysteinyl-tRNA(Sec) biosynthesis; L-seryl-tRNA(Sec) from L-serine and tRNA(Sec): step 1/1. In terms of biological role, catalyzes the attachment of serine to tRNA(Ser). Is also able to aminoacylate tRNA(Sec) with serine, to form the misacylated tRNA L-seryl-tRNA(Sec), which will be further converted into selenocysteinyl-tRNA(Sec). The chain is Serine--tRNA ligase from Idiomarina loihiensis (strain ATCC BAA-735 / DSM 15497 / L2-TR).